The chain runs to 207 residues: Phenazine biosynthesis protein PhzD (207 aa).

The active-site Proton donor is the aspartate 38. Residues glutamine 78, arginine 87, lysine 122, and 151–155 (YAHVG) each bind substrate.

Belongs to the isochorismatase family. Homodimer.

The enzyme catalyses (2S)-2-amino-4-deoxychorismate + H2O = (5S,6S)-6-amino-5-hydroxycyclohexa-1,3-diene-1-carboxyate + pyruvate. It participates in antibiotic biosynthesis; phenazine biosynthesis. Functionally, involved in the biosynthesis of the antibiotic phenazine, a nitrogen-containing heterocyclic molecule having important roles in virulence, competition and biological control. Catalyzes the hydrolysis of the vinyl ether functional group of 2-amino-2-deoxyisochorismate (ADIC), yielding pyruvate and trans-2,3-dihydro-3-hydroxyanthranilic acid (DHHA). The sequence is that of Phenazine biosynthesis protein PhzD from Pseudomonas fluorescens.